The chain runs to 245 residues: Probable phosphatase PMI1003 (245 aa).

Residues histidine 7, histidine 9, histidine 15, histidine 40, glutamate 73, histidine 101, histidine 131, aspartate 192, and histidine 194 each contribute to the Zn(2+) site.

Belongs to the PHP family. In terms of assembly, homotrimer. Zn(2+) serves as cofactor.

In Proteus mirabilis (strain HI4320), this protein is Probable phosphatase PMI1003.